The primary structure comprises 184 residues: Large ribosomal subunit protein uL18 (184 aa).

It belongs to the universal ribosomal protein uL18 family. Part of the 50S ribosomal subunit. Contacts the 5S and 23S rRNAs.

This is one of the proteins that bind and probably mediate the attachment of the 5S RNA into the large ribosomal subunit, where it forms part of the central protuberance. The protein is Large ribosomal subunit protein uL18 (rpl18) of Haloferax volcanii (strain ATCC 29605 / DSM 3757 / JCM 8879 / NBRC 14742 / NCIMB 2012 / VKM B-1768 / DS2) (Halobacterium volcanii).